We begin with the raw amino-acid sequence, 386 residues long: Succinate--CoA ligase [ADP-forming] subunit beta (386 aa).

The ATP-grasp domain occupies 9–244 (KEILHKFNVP…YDEEVKEEIE (236 aa)). ATP contacts are provided by residues K46, 53 to 55 (GRG), E99, S102, and E107. 2 residues coordinate Mg(2+): N199 and D213. Residues N264 and 321 to 323 (GIM) contribute to the substrate site.

The protein belongs to the succinate/malate CoA ligase beta subunit family. Heterotetramer of two alpha and two beta subunits. Requires Mg(2+) as cofactor.

The catalysed reaction is succinate + ATP + CoA = succinyl-CoA + ADP + phosphate. It catalyses the reaction GTP + succinate + CoA = succinyl-CoA + GDP + phosphate. Its pathway is carbohydrate metabolism; tricarboxylic acid cycle; succinate from succinyl-CoA (ligase route): step 1/1. Its function is as follows. Succinyl-CoA synthetase functions in the citric acid cycle (TCA), coupling the hydrolysis of succinyl-CoA to the synthesis of either ATP or GTP and thus represents the only step of substrate-level phosphorylation in the TCA. The beta subunit provides nucleotide specificity of the enzyme and binds the substrate succinate, while the binding sites for coenzyme A and phosphate are found in the alpha subunit. The chain is Succinate--CoA ligase [ADP-forming] subunit beta from Wolbachia pipientis subsp. Culex pipiens (strain wPip).